Here is a 347-residue protein sequence, read N- to C-terminus: N-acetyl-gamma-glutamyl-phosphate reductase (347 aa).

Residue Cys-152 is part of the active site.

The protein belongs to the NAGSA dehydrogenase family. Type 1 subfamily.

Its subcellular location is the cytoplasm. The enzyme catalyses N-acetyl-L-glutamate 5-semialdehyde + phosphate + NADP(+) = N-acetyl-L-glutamyl 5-phosphate + NADPH + H(+). The protein operates within amino-acid biosynthesis; L-arginine biosynthesis; N(2)-acetyl-L-ornithine from L-glutamate: step 3/4. Its function is as follows. Catalyzes the NADPH-dependent reduction of N-acetyl-5-glutamyl phosphate to yield N-acetyl-L-glutamate 5-semialdehyde. In Neisseria meningitidis serogroup A / serotype 4A (strain DSM 15465 / Z2491), this protein is N-acetyl-gamma-glutamyl-phosphate reductase.